The primary structure comprises 173 residues: Putative metal-dependent hydrolase BCG9842_B2589 (173 aa).

Zn(2+) contacts are provided by His65, His156, and His160.

This sequence belongs to the metal hydrolase YfiT family. Homodimer. Zn(2+) serves as cofactor.

The protein localises to the cytoplasm. Its function is as follows. Possible metal-dependent hydrolase. This is Putative metal-dependent hydrolase BCG9842_B2589 from Bacillus cereus (strain G9842).